The sequence spans 80 residues: Exodeoxyribonuclease 7 small subunit (80 aa).

Belongs to the XseB family. In terms of assembly, heterooligomer composed of large and small subunits.

The protein localises to the cytoplasm. It catalyses the reaction Exonucleolytic cleavage in either 5'- to 3'- or 3'- to 5'-direction to yield nucleoside 5'-phosphates.. In terms of biological role, bidirectionally degrades single-stranded DNA into large acid-insoluble oligonucleotides, which are then degraded further into small acid-soluble oligonucleotides. The chain is Exodeoxyribonuclease 7 small subunit from Rickettsia felis (strain ATCC VR-1525 / URRWXCal2) (Rickettsia azadi).